Reading from the N-terminus, the 371-residue chain is Queuine tRNA-ribosyltransferase (371 aa).

Catalysis depends on Asp89, which acts as the Proton acceptor. Substrate is bound by residues 89–93, Asp143, Gln185, and Gly212; that span reads DSGGF. The RNA binding stretch occupies residues 243 to 249; it reads GVGKPED. The active-site Nucleophile is the Asp262. An RNA binding; important for wobble base 34 recognition region spans residues 267-271; the sequence is TRNAR. 4 residues coordinate Zn(2+): Cys300, Cys302, Cys305, and His331.

Belongs to the queuine tRNA-ribosyltransferase family. Homodimer. Within each dimer, one monomer is responsible for RNA recognition and catalysis, while the other monomer binds to the replacement base PreQ1. Requires Zn(2+) as cofactor.

The catalysed reaction is 7-aminomethyl-7-carbaguanine + guanosine(34) in tRNA = 7-aminomethyl-7-carbaguanosine(34) in tRNA + guanine. It participates in tRNA modification; tRNA-queuosine biosynthesis. Its function is as follows. Catalyzes the base-exchange of a guanine (G) residue with the queuine precursor 7-aminomethyl-7-deazaguanine (PreQ1) at position 34 (anticodon wobble position) in tRNAs with GU(N) anticodons (tRNA-Asp, -Asn, -His and -Tyr). Catalysis occurs through a double-displacement mechanism. The nucleophile active site attacks the C1' of nucleotide 34 to detach the guanine base from the RNA, forming a covalent enzyme-RNA intermediate. The proton acceptor active site deprotonates the incoming PreQ1, allowing a nucleophilic attack on the C1' of the ribose to form the product. After dissociation, two additional enzymatic reactions on the tRNA convert PreQ1 to queuine (Q), resulting in the hypermodified nucleoside queuosine (7-(((4,5-cis-dihydroxy-2-cyclopenten-1-yl)amino)methyl)-7-deazaguanosine). The protein is Queuine tRNA-ribosyltransferase of Pseudomonas syringae pv. tomato (strain ATCC BAA-871 / DC3000).